A 254-amino-acid polypeptide reads, in one-letter code: MVRPKKKPVLGKDGKPLSAAAAKLRLLKRLKCTTKYEKLAADSGAKLIAGIDEVGRGALFGPVVAAAVILDPNYRIKGLRDSKLLPAETREILSKRIREHCIAWSIAAVDVARIDQLNIYWASNLAMKHAVRGLSCQPDHLLIDAMKLDLDCAQTPIIHGDALSASIAAASIIAKVHRDALIREWAPIFPEYDLASNKGYSAPKHIKALREFGPSPLHRQSFAPVWMASAPQEVLEFMLEETADTAVPPEVLED.

One can recognise an RNase H type-2 domain in the interval lysine 46–valine 234. Aspartate 52, glutamate 53, and aspartate 144 together coordinate a divalent metal cation.

Belongs to the RNase HII family. Mn(2+) serves as cofactor. Requires Mg(2+) as cofactor.

It localises to the cytoplasm. The enzyme catalyses Endonucleolytic cleavage to 5'-phosphomonoester.. Its function is as follows. Endonuclease that specifically degrades the RNA of RNA-DNA hybrids. The polypeptide is Ribonuclease HII (Koribacter versatilis (strain Ellin345)).